The following is a 488-amino-acid chain: L-amino oxidase (488 aa).

Residues 60 to 61, 80 to 81, arginine 88, and 104 to 107 contribute to the FAD site; these read MS, EA, and GPMR. The substrate site is built by arginine 107 and tyrosine 388. A disulfide bridge connects residues cysteine 347 and cysteine 428. FAD-binding positions include glutamate 474 and 481–486; that span reads GWIDST. A substrate-binding site is contributed by 481 to 482; it reads GW.

This sequence belongs to the flavin monoamine oxidase family. FIG1 subfamily. As to quaternary structure, monomer. This is in contrast with most of its orthologs, that are non-covalently linked homodimers. FAD serves as cofactor. In terms of processing, N-glycosylated. As to expression, expressed by the venom gland.

The protein localises to the secreted. It carries out the reaction an L-alpha-amino acid + O2 + H2O = a 2-oxocarboxylate + H2O2 + NH4(+). It catalyses the reaction L-leucine + O2 + H2O = 4-methyl-2-oxopentanoate + H2O2 + NH4(+). In terms of biological role, catalyzes an oxidative deamination of predominantly hydrophobic and aromatic L-amino acids, thus producing hydrogen peroxide that may contribute to the diverse toxic effects of this enzyme. Shows activity on L-Leu. Exhibits diverse biological activities, such as hemorrhage, hemolysis, edema, antibacterial and antiparasitic activities, as well as regulation of platelet aggregation. When tested on SW480 and SW620 human colon cancer cells, shows inhibition of cell proliferation, and induction of apoptosis, which is probably a consequence of the increased caspase-3 activity and the decreased Bcl-2 expression. The protein is L-amino oxidase of Trimeresurus purpureomaculatus (Mangrove pit viper).